A 139-amino-acid chain; its full sequence is Putative pre-16S rRNA nuclease (139 aa).

The protein belongs to the YqgF nuclease family.

The protein resides in the cytoplasm. Its function is as follows. Could be a nuclease involved in processing of the 5'-end of pre-16S rRNA. This is Putative pre-16S rRNA nuclease from Streptococcus pyogenes serotype M2 (strain MGAS10270).